Consider the following 440-residue polypeptide: Probable carboxypeptidase AFUB_072730 (440 aa).

The first 16 residues, 1 to 16 (MKPLTSLLLSAALSAA), serve as a signal peptide directing secretion. Asparagine 87 and asparagine 149 each carry an N-linked (GlcNAc...) asparagine glycan. Aspartate 165 contacts Zn(2+). Glutamate 197 serves as the catalytic Proton acceptor. Glutamate 198 lines the Zn(2+) pocket. 2 N-linked (GlcNAc...) asparagine glycosylation sites follow: asparagine 353 and asparagine 372.

Belongs to the peptidase M20A family. Zn(2+) serves as cofactor.

Its subcellular location is the secreted. The sequence is that of Probable carboxypeptidase AFUB_072730 from Aspergillus fumigatus (strain CBS 144.89 / FGSC A1163 / CEA10) (Neosartorya fumigata).